Consider the following 808-residue polypeptide: Sucrose synthase 4 (808 aa).

The interval 277–754 (MVFNVVILSP…GLERIQEKYT (478 aa)) is GT-B glycosyltransferase.

The protein belongs to the glycosyltransferase 1 family. Plant sucrose synthase subfamily. Detected in the whole plant with highest expression in young rosette leaves and roots.

The enzyme catalyses an NDP-alpha-D-glucose + D-fructose = a ribonucleoside 5'-diphosphate + sucrose + H(+). In terms of biological role, sucrose-cleaving enzyme that provides UDP-glucose and fructose for various metabolic pathways. This chain is Sucrose synthase 4 (SUS4), found in Arabidopsis thaliana (Mouse-ear cress).